We begin with the raw amino-acid sequence, 318 residues long: Mitochondrial thiamine pyrophosphate carrier 1 (318 aa).

6 consecutive transmembrane segments (helical) span residues 12–28 (GTRR…GLVS), 91–107 (LMYV…YRTT), 125–141 (SFVA…ASTY), 181–197 (GCSA…GLFF), 221–237 (AAGV…VFPL), and 284–301 (GLTV…VTMW). Solcar repeat units lie at residues 12–110 (GTRR…TTQA), 120–206 (PPPA…LRPV), and 214–309 (PFGS…SLHY).

Belongs to the mitochondrial carrier (TC 2.A.29) family.

The protein localises to the mitochondrion inner membrane. In terms of biological role, mitochondrial transporter that mediates uptake of thiamine pyrophosphate (ThPP) into mitochondria. This is Mitochondrial thiamine pyrophosphate carrier 1 (tpc1) from Aspergillus oryzae (strain ATCC 42149 / RIB 40) (Yellow koji mold).